Consider the following 95-residue polypeptide: RING finger protein Z (95 aa).

Gly-2 carries N-myristoyl glycine; by host lipidation. An RING-type; atypical zinc finger spans residues 38-74 (CKSCWFANRGLIACSDHYLCLNCLTRLRSQSQFCGIC). Positions 88 to 91 (PSAP) match the PTAP/PSAP motif motif.

It belongs to the arenaviridae Z protein family. Interacts with protein NP; this interaction probably directs the encapsidated genome to budding sites. Interacts (via RING domain) with polymerase L; this interaction inhibits viral transcription and replication, Z partially blocks the product exit tunnel for the releasing nascent RNA product. Interacts with the glycoprotein complex; this interaction plays a role in virion budding. Interacts with host eIF4E; this interaction results in eIF4E reduced affinity for its substrate, the 5'-m7 G cap structure. Interacts (via late-budding domain) with host TSG101; this interaction is essential for budding and release of viral particles. Interacts with host RPLP0; this interaction may serve to load ribosome-like particles inside the virion. Interacts with host PML; this interaction induces PML bodies redistribution in the cytoplasm upon viral infection. Post-translationally, myristoylation is required for the role of RING finger protein Z in assembly and budding.

The protein localises to the virion. Its subcellular location is the host cytoplasm. It localises to the host perinuclear region. The protein resides in the host cell membrane. Its function is as follows. Plays a crucial role in virion assembly and budding. Expressed late in the virus life cycle, it acts as an inhibitor of viral transcription and RNA synthesis by interacting with the viral polymerase L. Presumably recruits the NP encapsidated genome to cellular membranes at budding sites via direct interaction with NP. Plays critical roles in the final steps of viral release by interacting with host TSG101, a member of the vacuolar protein-sorting pathway and using other cellular host proteins involved in vesicle formation pathway. The budding of the virus progeny occurs after association of protein Z with the viral glycoprotein complex SSP-GP1-GP2 at the cell periphery, step that requires myristoylation of protein Z. Also selectively represses protein production by associating with host eIF4E. In cell-based minigenome assay, has an inhibitory effect on the ribonucleoprotein machinery (vRNP), which is responsible for the replication and transcription of the viral genome. This is RING finger protein Z from Pirital mammarenavirus (isolate Rat/Venezuela/VAV-488/1995) (PIRV).